The sequence spans 765 residues: LPS-assembly protein LptD (765 aa).

An N-terminal signal peptide occupies residues 1–18 (MQIRYFLALSLLPQVVLA).

Belongs to the LptD family. As to quaternary structure, component of the lipopolysaccharide transport and assembly complex. Interacts with LptE and LptA.

The protein localises to the cell outer membrane. Its function is as follows. Together with LptE, is involved in the assembly of lipopolysaccharide (LPS) at the surface of the outer membrane. The protein is LPS-assembly protein LptD of Shewanella sp. (strain ANA-3).